The chain runs to 217 residues: uncharacterized protein (217 aa).

The N-terminal stretch at 1–24 is a signal peptide; that stretch reads MRYTVLIALQGALLLLLLIDDGQG.

This is an uncharacterized protein from Aedes vexans (Inland floodwater mosquito).